The primary structure comprises 562 residues: Probable malate:quinone oxidoreductase (562 aa).

It belongs to the MQO family. FAD is required as a cofactor.

The catalysed reaction is (S)-malate + a quinone = a quinol + oxaloacetate. Its pathway is carbohydrate metabolism; tricarboxylic acid cycle; oxaloacetate from (S)-malate (quinone route): step 1/1. The polypeptide is Probable malate:quinone oxidoreductase (Stenotrophomonas maltophilia (strain K279a)).